Consider the following 1204-residue polypeptide: ATP-dependent helicase/nuclease subunit A (1204 aa).

A UvrD-like helicase ATP-binding domain is found at 2–469 (TKFTKEQNQA…IVLSDNFRST (468 aa)). Residue 23-30 (ASAGSGKT) coordinates ATP. Residues 496-784 (EGQLQFGATY…KLMTIHASKG (289 aa)) enclose the UvrD-like helicase C-terminal domain.

This sequence belongs to the helicase family. AddA subfamily. As to quaternary structure, heterodimer of AddA and AddB/RexB. It depends on Mg(2+) as a cofactor.

The enzyme catalyses Couples ATP hydrolysis with the unwinding of duplex DNA by translocating in the 3'-5' direction.. It catalyses the reaction ATP + H2O = ADP + phosphate + H(+). Functionally, the heterodimer acts as both an ATP-dependent DNA helicase and an ATP-dependent, dual-direction single-stranded exonuclease. Recognizes the chi site generating a DNA molecule suitable for the initiation of homologous recombination. The AddA nuclease domain is required for chi fragment generation; this subunit has the helicase and 3' -&gt; 5' nuclease activities. The sequence is that of ATP-dependent helicase/nuclease subunit A from Lactobacillus johnsonii (strain CNCM I-12250 / La1 / NCC 533).